A 161-amino-acid chain; its full sequence is 6,7-dimethyl-8-ribityllumazine synthase (161 aa).

Residues Trp26, 58–60 (AFE), and 81–83 (VVI) contribute to the 5-amino-6-(D-ribitylamino)uracil site. 86–87 (GT) is a binding site for (2S)-2-hydroxy-3-oxobutyl phosphate. His89 functions as the Proton donor in the catalytic mechanism. Phe114 contacts 5-amino-6-(D-ribitylamino)uracil. Arg128 lines the (2S)-2-hydroxy-3-oxobutyl phosphate pocket.

The protein belongs to the DMRL synthase family.

It catalyses the reaction (2S)-2-hydroxy-3-oxobutyl phosphate + 5-amino-6-(D-ribitylamino)uracil = 6,7-dimethyl-8-(1-D-ribityl)lumazine + phosphate + 2 H2O + H(+). It participates in cofactor biosynthesis; riboflavin biosynthesis; riboflavin from 2-hydroxy-3-oxobutyl phosphate and 5-amino-6-(D-ribitylamino)uracil: step 1/2. Catalyzes the formation of 6,7-dimethyl-8-ribityllumazine by condensation of 5-amino-6-(D-ribitylamino)uracil with 3,4-dihydroxy-2-butanone 4-phosphate. This is the penultimate step in the biosynthesis of riboflavin. The chain is 6,7-dimethyl-8-ribityllumazine synthase from Nocardioides sp. (strain ATCC BAA-499 / JS614).